The chain runs to 139 residues: Holo-[acyl-carrier-protein] synthase (139 aa).

Mg(2+) contacts are provided by Asp8 and Glu61.

The protein belongs to the P-Pant transferase superfamily. AcpS family. Mg(2+) serves as cofactor.

It localises to the cytoplasm. The enzyme catalyses apo-[ACP] + CoA = holo-[ACP] + adenosine 3',5'-bisphosphate + H(+). Functionally, transfers the 4'-phosphopantetheine moiety from coenzyme A to a Ser of acyl-carrier-protein. The polypeptide is Holo-[acyl-carrier-protein] synthase (Rhodopseudomonas palustris (strain BisB5)).